We begin with the raw amino-acid sequence, 174 residues long: Gamma-crystallin C (174 aa).

2 consecutive Beta/gamma crystallin 'Greek key' domains span residues 2 to 40 and 41 to 83; these read GKIT…RVES and GCWM…CLIP. Residue Cys23 is modified to S-methylcysteine. The connecting peptide stretch occupies residues 84–87; the sequence is QTVS. Beta/gamma crystallin 'Greek key' domains follow at residues 88–128 and 129–171; these read HRLR…HVLE and GCWV…RRVV.

It belongs to the beta/gamma-crystallin family. In terms of assembly, monomer.

Its function is as follows. Crystallins are the dominant structural components of the vertebrate eye lens. This is Gamma-crystallin C (CRYGC) from Homo sapiens (Human).